Reading from the N-terminus, the 141-residue chain is Hemoglobin subunit alpha (141 aa).

Residues 1-141 (VLSSTDKSNV…VSTVLTSKYR (141 aa)) enclose the Globin domain. Ser-3 is modified (phosphoserine). Residues Lys-7 and Lys-11 each carry the N6-succinyllysine modification. Lys-16 carries the post-translational modification N6-acetyllysine; alternate. An N6-succinyllysine; alternate modification is found at Lys-16. Tyr-24 bears the Phosphotyrosine mark. Phosphoserine is present on Ser-35. Lys-40 carries the N6-succinyllysine modification. His-58 contributes to the O2 binding site. His-87 is a binding site for heme b. Position 102 is a phosphoserine (Ser-102). Thr-108 carries the phosphothreonine modification. Phosphoserine occurs at positions 124 and 131. Phosphothreonine is present on residues Thr-134 and Thr-137. A Phosphoserine modification is found at Ser-138.

This sequence belongs to the globin family. Heterotetramer of two alpha chains and two beta chains. As to expression, red blood cells.

In terms of biological role, involved in oxygen transport from the lung to the various peripheral tissues. Functionally, hemopressin acts as an antagonist peptide of the cannabinoid receptor CNR1. Hemopressin-binding efficiently blocks cannabinoid receptor CNR1 and subsequent signaling. This Pteropus alecto (Black flying fox) protein is Hemoglobin subunit alpha (HBA).